Reading from the N-terminus, the 128-residue chain is Small ribosomal subunit protein uS9 (128 aa).

The tract at residues 105–128 (DPRSVERKKPGQPKARRRFQFSKR) is disordered. Positions 114-128 (PGQPKARRRFQFSKR) are enriched in basic residues.

Belongs to the universal ribosomal protein uS9 family.

This chain is Small ribosomal subunit protein uS9, found in Bacteroides thetaiotaomicron (strain ATCC 29148 / DSM 2079 / JCM 5827 / CCUG 10774 / NCTC 10582 / VPI-5482 / E50).